A 175-amino-acid chain; its full sequence is Disulfide bond formation protein B (175 aa).

Over 1–13 (MTAFTRFAHSRAS) the chain is Cytoplasmic. The chain crosses the membrane as a helical span at residues 14–30 (WFILTGSAIALEAAALY). The Periplasmic portion of the chain corresponds to 31–48 (FQYVMKLDPCVMCIYQRL). An intrachain disulfide couples Cys40 to Cys43. A helical transmembrane segment spans residues 49-64 (AVFGILASGLIGMTAP). Topologically, residues 65–71 (KFLIVRI) are cytoplasmic. Residues 72 to 89 (LGAIGWAVSATWGLKLAL) form a helical membrane-spanning segment. Over 90–144 (ALVDMQNNPSPFSTCSFLPEFPAWMPLHEWFPSVMLPTGMCTDVPWQFMGVTMAE) the chain is Periplasmic. The cysteines at positions 104 and 130 are disulfide-linked. The chain crosses the membrane as a helical span at residues 145–163 (WMVVAFSGYLVALLLFIVP). The Cytoplasmic portion of the chain corresponds to 164 to 175 (ILSGSNKPSLYK).

The protein belongs to the DsbB family.

It localises to the cell inner membrane. Its function is as follows. Required for disulfide bond formation in some periplasmic proteins. Acts by oxidizing the DsbA protein. In Shewanella sp. (strain ANA-3), this protein is Disulfide bond formation protein B.